The chain runs to 482 residues: Sugar transporter ERD6-like 16 (482 aa).

The next 12 helical transmembrane spans lie at 42-62, 80-100, 117-137, 142-162, 173-193, 197-217, 280-300, 316-336, 344-364, 382-402, 413-433, and 443-463; these read LMVLFSTFVAVCGSFEFGSCV, LAEFSMFGSILTIGAMLGAVM, SACFCITGWLAVFFTKGALLL, FFTGYGIGVFSYVVPVYIAEI, TLNQLMIVIGSSVSFLIGSLI, TLALTGLAPCIVLLFGLCFIP, VIIGVSLMVFQQFVGINGIGF, LGTIAIACVQVPITVLGTILI, LIMISAGGIFLGCILTGTSFL, GVLIYVAAFSIGMGPVPWVIM, IAGSLVVLVNWSGAWAVSYTF, and GTFYLYSAFAAATIIFVAKMV.

Belongs to the major facilitator superfamily. Sugar transporter (TC 2.A.1.1) family.

Its subcellular location is the membrane. In terms of biological role, sugar transporter. This Arabidopsis thaliana (Mouse-ear cress) protein is Sugar transporter ERD6-like 16.